A 433-amino-acid chain; its full sequence is Glutamate-1-semialdehyde 2,1-aminomutase (433 aa).

N6-(pyridoxal phosphate)lysine is present on lysine 270.

It belongs to the class-III pyridoxal-phosphate-dependent aminotransferase family. HemL subfamily. As to quaternary structure, homodimer. Pyridoxal 5'-phosphate serves as cofactor.

The protein localises to the cytoplasm. It carries out the reaction (S)-4-amino-5-oxopentanoate = 5-aminolevulinate. The protein operates within porphyrin-containing compound metabolism; protoporphyrin-IX biosynthesis; 5-aminolevulinate from L-glutamyl-tRNA(Glu): step 2/2. The sequence is that of Glutamate-1-semialdehyde 2,1-aminomutase from Symbiobacterium thermophilum (strain DSM 24528 / JCM 14929 / IAM 14863 / T).